Here is a 694-residue protein sequence, read N- to C-terminus: Prolyl 3-hydroxylase 2 (694 aa).

Residues 1–23 (MAPGSRSWGAVLLLAAMLPAACG) form the signal peptide. TPR repeat units lie at residues 35–68 (FDAL…RREL), 136–169 (RVPY…NPEH), 196–229 (HMED…YYAE), and 292–325 (PLHY…HPDD). Positions 386-418 (KRYGARQDEHSVPSSISSEPEDGPRLSLTKKPT) form a coiled coil. The disordered stretch occupies residues 395 to 427 (HSVPSSISSEPEDGPRLSLTKKPTPKPDRELKE). 2 N-linked (GlcNAc...) asparagine glycosylation sites follow: Asn-446 and Asn-535. The region spanning 543–657 (THLVCRTALS…RCAVALWFTL (115 aa)) is the Fe2OG dioxygenase domain. His-566, Asp-568, and His-638 together coordinate Fe cation. Residue Arg-648 is part of the active site. The Prevents secretion from ER motif lies at 691–694 (KDEL).

This sequence belongs to the leprecan family. Fe cation is required as a cofactor. The cofactor is L-ascorbate.

The protein resides in the endoplasmic reticulum. The protein localises to the sarcoplasmic reticulum. It localises to the golgi apparatus. The catalysed reaction is L-prolyl-[collagen] + 2-oxoglutarate + O2 = trans-3-hydroxy-L-prolyl-[collagen] + succinate + CO2. Prolyl 3-hydroxylase that catalyzes the post-translational formation of 3-hydroxyproline on collagens. Contributes to proline 3-hydroxylation of collagen COL4A1 and COL1A1 in tendons, the eye sclera and in the eye lens capsule. Has high activity with the type IV collagen COL4A1, and lower activity with COL1A1. Catalyzes hydroxylation of the first Pro in Gly-Pro-Hyp sequences where Hyp is 4-hydroxyproline. Has no activity on substrates that lack 4-hydroxyproline in the third position. This Gallus gallus (Chicken) protein is Prolyl 3-hydroxylase 2.